The following is a 333-amino-acid chain: Protein RecA (333 aa).

ATP is bound at residue 69–76 (GPESSGKT).

The protein belongs to the RecA family.

It localises to the cytoplasm. Its function is as follows. Can catalyze the hydrolysis of ATP in the presence of single-stranded DNA, the ATP-dependent uptake of single-stranded DNA by duplex DNA, and the ATP-dependent hybridization of homologous single-stranded DNAs. It interacts with LexA causing its activation and leading to its autocatalytic cleavage. The chain is Protein RecA from Mesoplasma florum (strain ATCC 33453 / NBRC 100688 / NCTC 11704 / L1) (Acholeplasma florum).